The following is a 318-amino-acid chain: Beta-ketoacyl-[acyl-carrier-protein] synthase III (318 aa).

Active-site residues include cysteine 113 and histidine 245. The interval 246–250 (QANIR) is ACP-binding. Asparagine 275 is a catalytic residue.

Belongs to the thiolase-like superfamily. FabH family. Homodimer.

It localises to the cytoplasm. It catalyses the reaction malonyl-[ACP] + acetyl-CoA + H(+) = 3-oxobutanoyl-[ACP] + CO2 + CoA. The protein operates within lipid metabolism; fatty acid biosynthesis. In terms of biological role, catalyzes the condensation reaction of fatty acid synthesis by the addition to an acyl acceptor of two carbons from malonyl-ACP. Catalyzes the first condensation reaction which initiates fatty acid synthesis and may therefore play a role in governing the total rate of fatty acid production. Possesses both acetoacetyl-ACP synthase and acetyl transacylase activities. Its substrate specificity determines the biosynthesis of branched-chain and/or straight-chain of fatty acids. The chain is Beta-ketoacyl-[acyl-carrier-protein] synthase III from Wolbachia pipientis wMel.